We begin with the raw amino-acid sequence, 334 residues long: Stabilizer of axonemal microtubules 3 (334 aa).

Disordered regions lie at residues 81–105 (AYVPKTHGGPCAQPRAPEPADPTRT), 128–153 (YQSSETRAQYTGSPSGDPRAPEYFGP), and 233–260 (QVWSHGPQRPPCPRSSRPPRPPRVRVPR). Residues 128–141 (YQSSETRAQYTGSP) are compositionally biased toward polar residues. The segment covering 240-251 (QRPPCPRSSRPP) has biased composition (pro residues).

In Homo sapiens (Human), this protein is Stabilizer of axonemal microtubules 3.